A 503-amino-acid chain; its full sequence is MSEQTIRTRFAPSPTGYLHVGGLRTALYNFLFAKKNGGQFLLRLEDTDRARLVEGAVENLLSSLEWAGIIPDESPKHGGDFGPYVQSERLDIYKQYVQQLLDEKKAYYCFATPDELEESRQLQIKQGVQPKYNRKWLPEDMGGSMPQSEIQKRLDAGEPCVIRMKIPDHTRIRHDDIIRGIVWFDSSTVDDQVLMKSDGFPTYHLASVVDDHLMNITHVIRGEEWLSSTPKHLLLYDFFGWEKPEFAHLPLLLNPDRSKLSKRQGDVAVEDYMAKGYSKDALVNFVALLGWNEGEGVEQEVYSMNELIEKFTLEKVGKSGAVFNVEKLNWIQKQHLKLVSHEDLAKQAKAILVEKLKERESMMPSEKITDDAYLLNVVELMHDRVNFVHEFVTFSEYFFFEPEAYEEAAIKKRWKENTNDLLSEFKGILAGLDNFNSAAIEEALAKYAELKGVKNAALIHPIRLAVSGVSFGPSLYHLMEVIGKEACLRRIERAVDKLDYQEA.

The 'HIGH' region motif lies at 12 to 22 (PSPTGYLHVGG). Residues 259 to 263 (KLSKR) carry the 'KMSKS' region motif. Lys262 lines the ATP pocket.

It belongs to the class-I aminoacyl-tRNA synthetase family. Glutamate--tRNA ligase type 1 subfamily. As to quaternary structure, monomer.

It is found in the cytoplasm. The enzyme catalyses tRNA(Glu) + L-glutamate + ATP = L-glutamyl-tRNA(Glu) + AMP + diphosphate. In terms of biological role, catalyzes the attachment of glutamate to tRNA(Glu) in a two-step reaction: glutamate is first activated by ATP to form Glu-AMP and then transferred to the acceptor end of tRNA(Glu). In Chloroherpeton thalassium (strain ATCC 35110 / GB-78), this protein is Glutamate--tRNA ligase.